Reading from the N-terminus, the 114-residue chain is Prefoldin subunit 6 (114 aa).

The residue at position 2 (S2) is an N-acetylserine.

Belongs to the prefoldin subunit beta family. As to quaternary structure, heterohexamer of two PFD-alpha type and four PFD-beta type subunits.

The protein resides in the nucleus. Functionally, binds specifically to cytosolic chaperonin (c-CPN) and transfers target proteins to it. Binds to nascent polypeptide chain and promotes folding in an environment in which there are many competing pathways for nonnative proteins. This chain is Prefoldin subunit 6 (YKE2), found in Saccharomyces cerevisiae (strain ATCC 204508 / S288c) (Baker's yeast).